An 8515-amino-acid polypeptide reads, in one-letter code: MSNNTMVNMSIEMKYDNDDTTSPDQKLPGLEALEMVKGAASVVAEIEPSSSASSIMGSREHHERMLGPLEVCVHDLVQEQSRQHGQTIAVHSIEKDLTYAELERYADWMAKYLMVKRDIQAGHIIPFCLKKSVWTMVAMLAIMKTGAACAALDPSQPVSRIKRILDDTEAPLVIVHRDYLGLAETLDVPSIVLGPDLWEGTSSGDTDKPLPVVDATQPAYIAFTSGSTGEPKGIVVPHRSIATSMREHGPATRVDTETRALQFASYTFDMSFQEMFTTLTHGGCVCVPSEAERWNDLAGAMERLGVNWAKLTPTVVRLLHPEQVPSLRTLVVGGEPITQDIIQTWAHRVDLIVSYGPAEASIMAAVSDPLAPTALPRVIGRQVGGTLHVVDAGNHDRLVEGSGEGELLIEGPILATGYLKDQSRTDATFIIDPKWVSCDSENVTTAPRRFLKTGDLVHRDEDGVLYHLGRKDFRLKLNGRLIDLAAIETCLLGSAQIASAVVIATREDTFWQQSLVAVISAKPTPSSRPDPHDAGHIRIQTQHDLMLPLIRDLKDVAQSALPDYMVPTVWLVVDSVPRLPSGKIHRRRVVQWLENLDEFTVQEIRSMQNHTPHCEPETAMERRLRDIWAEVLNMPVSTVSTMASFTGLGGDSVAAMRLARRCAAQGLEIDVQMILQNLSITELAPRVKVAEHSTDTSADNERFSIGISLDQLCQSLPPRLRSSITLDDVVDTYRCSPMQEAILLSRSRFQGYYDVRWVAEVVSIDQDTPISLQRVRDAWVDVVRRHPALRTFFVQDASTGNRLLTQVILGSFPPLVSIDHSQATLDGIMGVNAAESSDPLHQEPHRLSLFSLPTGQVFLKLELNHALSDGVSTALIFRDLSLAYSKALPSSPAPSFGGFIRRLNLGEAEASSTALKYWTDRLTGMVPCLFPVLREAAWTGPSAVQHVEIPIHGSQGALRRFCTQHGTTIANVFQTAWALVLSIYTGTDDVSFCYLVSGRDASVDNVDEIVGPLISIMVHRLTLSRSLALLQVLRQVQSDFTVALGHQHCSLAQIAHSLNLRGQPMSNTVVNVQRRFSQGGPDGVADVYIRGIDCCNPTEFAIAVDVEDWETYMTARLSYWESCISQTQAEGIAETLAEVIRNIQTNPLQTVGEVALVGDAVLAKLSTWNAVLPEANEACLPELVERQVISQPSAVAIDTDAEQITYISLWNLSGLLAGRLIDSGVQPRDLVAVCVPQSSWAVIAMLAIQRAGGACVPLDPKAPAQRWWEIISRTGISTVVTSETKKHIMSSQLPGLQVVSADGTEIDQHHLQGSGRVLPVLSVDSTAYVLFTSGSTGSPKGIDVPHRAICTSLCAHCPVLGITNETRSLQFAAYTFDASIEETFGVLVHGGCVCIPSEDTKMNGLVDFINRKAISWAFFTPSLVRLIDPDLVPSLQTIVLGGEAVGNDIFNTWSHRVDLINGYGPAEASICCAAAHLSLRQTQSPSTIGRAVGCRIWVVDPQNINRLLPPDCVGELLIEGHIVANGYWGDEERTASSFLPPPEFLQSLSLEYPADNFRRCFYRTGDLVRQRHDGSLIYVGRSDWQTKVNGQRVEIGEVEAQLSFHMAKNHSNHLSMVCVPKSGPWMKRLVAILSLDPEECTVGNRSNVVFCLDKPETAAMIRTISKGIESSLPPFMIPTVWIPVKQLPTLASGKINRRCVQEWVETSNEGIFLSVSRINSEAFGTSSTETTRGLTPTETVIRAIWSRVLNIPLHSIGLDNTFLSLGGDSISAMQVVYQAHREGLTISVQDIFHCKTVAKLGRHADHSSKNTSSSNLLAPPVDEVEVPFALSPIQQWFFESVPHKPAILNHYNQSAHFRVMKEIDHSQLFKALQHVVQRHAMLRSRFILDSWSWQQKITTDIEGSFRLEVESIDAITAFRSCCERAQKMIDIIHGPLLVAILVKVAEPAQHFLVLIGHHLSMDVVSWSIIHRELEAFLAGGQVIAPLSSTSFQQWARLHYEPNIVPAEPREVLPFSVLEADLDYWGMRDTANEYRHGEYITTSVDEETTASIFKEANIAIGTEPVELIMAAVLYSFGRIFHDRSLPALYMEAHGREGDEFGLDLSGTVGWFTTICPLQLHRESLHTWARAVAQVKDRRRSIPAKGWAYFACRTVSPKGQASFNHHQQMEILFNFTGSTGDINDEHDRFLSPVRLMEDSRSDFDPKTPRVALFAIEASVENRQLRFSVSYHRSMRHVPRVKQWIHSLPSTLQEGVQMLSTIGRQPTLYDCPLAALNYSDLDSILARIQQSQADMVVEEIYPCSHIQEGILLSSMRNPGHYQVRWLVKVEARRGLPVSTQRLAKAWQSVVRKHSILRTIFVDDPSGTSSFLQVVVEDPRYPASIVEVQHRDSVASLDEDIDFTVGELPYRATIYQLHDGNVFFLLDISHAILDGTSMGILAHELVRGYDGSLTGDEAPHYRDYIRLLQTMPRNETLAHWKAYLQDIEPCKMISRNNCVEKVITPEVRKVAVQLPSTESLQQFCKTYEVTFANILQAVWAVVLMHYSGSETVCFGYLSSGRDLPIPHVDRAVGPYINILPCAVRLQQSSSRLDVVKAIQADLYQNLAHEHCSLWQIHKELGLKGTTLFNTLVNFQKTTAAVEDASISLTTVASRDPSEYDLAFNVTDEGSSMTAELAFWSSFMDEPDANDLSRAVSRVFNEFVRSPEAVLHDLSPIGPLNVEQIVRLMPSPISGEQQCLHWLIEQWVCRTPDAPAVCSTELEWSYAKLHQLTTSLSHHLCQLGVGRNDRAAICMEKSPWVIVAMLAVLQAGAAFVPLDPSHPRTRRESMISSLDAQVLLISLDADEDAHLTMSSCRQVRVGSTRGAGSDTGVSSNLPKNEPDDAAYILFTSGSTGQPKGVVVPHRAVCSSIKAWSDMLNIRSTTRSLQFAAYTFDAAIGEIFAVLANGGCVCVPSESERLNFLPETITQLDVNWSFLTPSVIRQIDPSSVPTLQTLALGGEPLSKEVIETWCDRVHLINVYGPTETCVFSHANPITDSKQEPSLIGPPILGRSWVVSPFNIDILVPRGCIGELVIESPAVAAGYFNNPEQTAKAFIAPPRWWKLAQDALSGSNKRTEDELPRFYLTGDMVRQNVDGSITYLGRRDTQTKINGQRVELGEIEYHILRLPAVLHAFVGVPKGGPYESRLVAVVSLRSEDGSGRGEAVLPEDFRLEVVEPQIAARYTSDLIVHLERNLPAYMVPAFLVVVRQLPLQPSGKINRRMILSWLSEPTMAGLQKTQHNFTRREEEPTTLGPVEKQMREIWSEVLNLPVTRIRLDQSFFDLGGDSITAMQVVSRCRRSGLQLTVQDLLRWKTITKVTPRTISLSQVTGERVYSLTSAGSVVDMRSIASKLEAIGLPGRAGVKGVYACSPMQEGILLAALKSPGKYEVVLMLEIRATGSQDRVDLELLESAWLQVVDRHDMLRTVFLQEKTATGVFSQVVYKHIDPPIEITTVDDLDTLRSASFSAGHFDCIPYRVTLCKLSGSSLAYVRLDISHAVVDGWSLSILSRDLQQAYDGQLPSQPVAQYCELIQYLESQPQETSMEFWRHLLTGMVPCHLPNMISNSGSHSTQEVKLHQTRLEVDRNQELRDFCAAHDITIANVFQLAWAVVLYRYTGMEDVCFGYLISGRDAPIDNLEDAVGPFINILVARATLRQGISVKEFLGEIRDTFLAMSAHQHTSLTQIQHELAVGNLGLFNTALNVQHRALTQQNPHSDIEICELSGRDPSEFGAILNVIDAGNTLEFALSYWSDLLSEETGREICSFLSCILSAVLDNSGCSVKTVSQTAADAARSFIDRKGDGDISSTPRGNPAPECYRPLKEPTNLIALTVQQVCAEVLDLSVSSLSLDETFLSLGGDSLLAMKVVSRCREHGVALTVQHMLQNQTIREVFEHARFSDSFSYRQLRHTPDPTGIPFPLSPIQKLHFHLMPTGQNYYNQSFFLRVTERLEASAIERAVRLLVLRHSVLRARFNQQIDGAWAQVISPDIEGSYHFSATSLISWDDLWPLVEGAQKRLNIRQGPLLSVDVLNLQGGDQHIYLVGHHLVVDLVSWRIILADLEIILRGGELSHDPPLSFQTWIRLATEYAQDNIDPATTLPFQLRPGNFAYWGMAGIPNLAKDVSSLSFTLPTDITSSLLGPANASLGTEPTDLMIAALAHTFSLVFHDHSGLTIFQESHGREPWTPEIDLSATCGWFTVLTPLSVETDKVEFRNTLKRVKDLRRRIPGKGWPYFASRFASRRRTGQKLDEKDEIEVLFNFVGLYQQFNRNDSLFVRPVADVSLPPDFSPDSIRLALIEINSLVDGQGRMVMHVTYNSRMKRQEGLTAWLERSQQVLEEEMPKLLTAAPERTPSDFQLLSLSYNELSALESHCHKQFGLDLNAVEDIYPCSPMQEGILLSQVRDPSLYRVEWVADVRCVGGEAVDLGQLKQAWGQVVRRHPILRTIFVERDHDAGAYLQLVLNQSLFPSSCNSASAYKVLLHLPYHITFQCLPETDTVRITLQANHAIIDGVTLAILARDLGSAYGGELPDVSGPPFSDFVKFLRTRTIDKDLQYWSEFLSDSQPTLFPSLGSQLGPTPGAEDDLFVEKHIHFADGAKMHEFCATFGVTVLNLFQVAWALVLRLYTGQDDVCFGYLASGRDSNVSGIDDIAGPMINMLVCRLQPTRDKTPRELLKQAHKHLTLALSHQHVPLAEVQNRLRTHGTPLFNTLVNLQKSNVGQGISHLTISTIGANDPNEFTIGLQIADNGQSIDVLFGHWLSRVSVDQADLLASLLSSTVNNIMARPRARLGTINFCNGVHAQKMAEWNEQARRPVVESTLHSIIQDQARQRPSTIAIASTEAMWTYEELERAADQTARYLLRQGVQPGTILPFCMAKSPRAIVVMLAILKVGCACAALDPAHPPDRLKLIVQQTGAKFVISEPVVMDSLILDGTANILSLTDCGGSINEPGLTPCQLPSVKPTDIAFIMFTSGSTGTPKGVLIQHDSICTSIQYNGEAEMVTSSTRGLQFSSYAFDTSVDEIFTVLSRGGCVCVPTEAERMNHLAAFISRFDVNWLSITPTVARLIAPGEVPSVRTIVLGGEEIDPGVVNHWKDHAELVASYGPAEASIACAASPVTSVVGDALLGRPVASSLWVVDPSDHDALMPIGTAGELVIGGPLVARGYLNDPDRTSLAFVCPKWSTELNLPFNRFYRTGDMARWNVDGTLSYVGRLDTQVKLNGQRVELGEVERHLLAQPCLQCSTCAVPQSGLLANRLVGVIGLQTPQISAADGFHCLEISQARTLVPYASDAEESLRAKLPPYMVPTVWIGVQSLPLNASGKLDRRKVNKWLESFQDEDTLNIFQLVGSEQEAEDEPPLTPIQQTIRNIWADVLGRTSESIGLQRSFFALGGDSVAAIRVVAQCRQANLQLTVQDVFQARTIQSLAACATAIIEKPVETVSSLLEPSQCENPESELAKLDSEVLSGLGGPENIEEIYPCSPMQEGILFSRSSIGGSYDTRLVVEVLPRDGAEVDLDRLKNAWAAVVQRHPILRTVFADRPSDDSAFIQVTFRKYRPVIMGCETSEQSLDDMIAMPVQPFDDRRNPPHRFTICTSSQQRVFILLEISHVLTDAVSIDIIWRDLQLAYEGALTTSKAPRYSRFVSYLQGTSQKDHMAYWLKFLKDAEPCLFPHLGTGNQKGATRAVSVTISRAMTDHIRQFCASLQITVANLIQVMWSMVLRSYTGMDDVSFGYITSGRDLPLDGIDDLVGPLISMMISRVRYTPSMKVADVIKQVGQDTVASMAHQHCSLAAIHREVGLKSRSLFNTVLTVVRPHSTQSIDSSLQLTQIASSAGTSEFDVVLEVSDSGVELDTTLAYSESALRSEDATNLSQAIMCALNWIIAHPESLVDHLSLCSPDLISQMTAMNNASPEWELRQCLHELISLRAHRQPDSPALWTGQGTMTYSELDSKSTMLARQLISLGVRPGSLVPICLSKSTVAVLAMLAIMKAGGAFVPLDPLHPTQRLADLVQRTGAKLILSSANTRNSAEFAGPRVVEVEQLLSRVTSVNEIDGVCPAPDPEGIAYVLFTSGSTGVPKGVVVPHRAVCCSIRAHSEAMNINTTSRSLQFASYTFDACICEIFSVLVAGGTVCIPSEEERVHDLAGFITRSQANWAFFTPTVIRTLGLSPSQVPSLRTLVLGGEVVTVHDARTWAGHVSLFNGYGPTETCVFCATTPIHPDGVTYGRIGRPIGCAAWVVRPDNHDILLPPGCPGELLIEGPIVSQGYLNDPVRTQEAFITHPAWAQNRKLSQNQSSARRFYKTGDLVRQSPDGTLVYMARLDSQVKINGQRLDLGEIRHQIHSVVSEDVQVFIDLLPPTCLPNEKALLVAFLASTRFEPEQTSGFSPPIKALTSQLEQDLPRLLPRYMIPSVYLPLSAIPLTSGGKVDRQALRRRVSRMSMKELLVYTGEEQGTKLPISTAEEQQMQMLWAEVLRIPPETIGASDHFFRLGADSIDGMKLVALAQRHGILITLADIFRSPRLSDLATLLESPAHPDDSKHDLKSIIPAFSLLNVHSRNTVLKEIKADYALDVSQIEDIYPCTPLQESLMAASIQSHGAYVHHLVEKLPPSGEVPAIMSAWQSVIKMTPILRTRIVQTVSAGLLQVVLKESVQWLHRRQAIQEYLDEDARHSMTLGDPLLRLACLHDPGTPHTGHIVITIHHSIYDGWSLPHIRKLVYATQNGHPCSTSLPFNRFIHYLERKSDSRASDSFWQSFLYRSQPLAFPPLPSTGYQPVGTDSVQLSVHWPSTFPPSAFTLSTFVRVAWALVLGSYSGTDDVIFGLSLSGRDTPIPGILDILGPTICTVPFRVKFSGESIGALLERAHADSAAMLPYQHIGLHHIRQLGPDCQLACDFQTLLVIQPARDPSDPEPHSELTFTSSGGLTYAFALICQPHPSGIELHGDFDSNCVSRPVAERLLSQMKSVMGTLIFGDRRKLAAEVDVIDISQKATLATWQREPLQPGEGRVEDLIISRAQQAPDDLAIHAWDGELTYNELVEESATLAENLKRRGIGPGMLVPLCFVKSIYYVVTLLAVTRTGAAFVPIDPDAPIERMQKILKLTNACCILTSASLAEQTRAKAPARVAVFAIPLDRSARMSTDSDLMPGQSIVSHEAVYVLFTSGSTGIPKGVVVTHSSMKASLKAHGRRLGLSESSRVLQFSNHTFDVSLLEILTTLAYGGCVCIPSDGDRVNRLSEYMRDAKVNFAILTPSVARILSPVSVPDLRTLALAGEAWGQEIVNIWRDSVRLFNAYGPTEATILSAIGEVDAQCFRPNNIGSGSGALCWVTSPTDPTRLMAIGAAGELLLEGPILAQGYLGEEEKTRAAFIDPPMWRRELSSHGAPPCRSSLYRTGDLARYEEDGSITYLGRMDGQVKIRGQRTELSEIEHHILASDAVRNAVVLLRKNKLVCVLSLQSTSLTPAPSRPGDIRPVSDDDRDAALRICLSIRAGLARKVPEYMVPDLWVPVIDLPLSSSGKLARKGVDDWLASVDTKHLINLSLQKIPLSTTSPSPNIASSSVERAIRQVIAGALQLPVQQVSVDAPFTALGGDSITAILVASKLRNMGILLTMRDILEFPSIQHLASREDLTAPSPANLPLDVEQVNVPFELTPIQRFFFCFFPDGANHFNQSILVRVARRFTYDQWITSLRALVQRHGMLRARFSNVDNNLQQRITDESEGACCVKWHTLEAMDPSYISTALDRCERRIDIFQGPICAVEIFDFPHEQIFFIAAHHLVMDFVSQQILLKDLDSLLAGEELSTPRPLSFQAWSLKQIEYGSNLALSPQAVLPHHENVPLANLNYWGIAAMDSCYADSAVRVLEFDSTVTSSLVGDANRAFNSEPIELFIASLLHSFANTFTDRSAPAIFKEGHGRQTREPRLDPSSTVGWFTTITPIALAVSPQLSTFEDTLRRVKDICRAIPANGFDYFTSRFLNASGSSAFQSHGPMMEIVLNYAGVLNNVQQGGTLFCPIATEEQRQMRYHDINPQLRRFAVFDIYAQVAGGKLSFTFAYSPSLNYQDRISAWIESLRRLLEAISVDLPAKQPQKTLADYPRARLDYTALERLHKDIIPSLYPAKLDDVWECSPTQTVMLRARSYQPLFFSPHFIWKIAGTKASEGNRERLTKAWKRIVARHSVLRSVFTSQLTATYHQIVLANPPFFITWADMAGKESPSEALRRLPPLPSDELHLAFRLTASEDDEGDLFCRLDINHALIDHVSINVILSDVIAVYGGQPMDSDSAFSTFRDYVEYSHLRLVDGEPYWQDRLHDACPCVLTQRPYRQIPGVLFSKSVSVNASALKALCLSSGFTLASLFQACWAVLLQRYVGSDDVLFGYIASNRGLPIRGIDRMVGPLISILPRRVRLSPSASSVSEQVRAIAKHIHEQLHDDLEHHMSAGNTMAEVIQRGRCIEELLFPFDTAINFRSQPSAAVNSVSSDPTSPLQFADGQDPMPVSHQP.

2 adenylation regions span residues 59–736 and 1163–1705; these read REHH…YRCS and AKLS…EWVE. Residues 587–1159 are condensation 1; it reads RRVVQWLENL…TVGEVALVGD (573 aa). The Carrier 1 domain occupies 615 to 691; sequence EPETAMERRL…ELAPRVKVAE (77 aa). Ser652 bears the O-(pantetheine 4'-phosphoryl)serine mark. Residues 1732-1808 form the Carrier 2 domain; the sequence is RGLTPTETVI…KLGRHADHSS (77 aa). O-(pantetheine 4'-phosphoryl)serine is present on Ser1769. Residues 1830–2273 form an epimerase 1 region; sequence LSPIQQWFFE…TLYDCPLAAL (444 aa). The condensation 2 stretch occupies residues 2301 to 2709; the sequence is SHIQEGILLS…RSPEAVLHDL (409 aa). An adenylation 3 region spans residues 2733–3266; that stretch reads QCLHWLIEQW…RMILSWLSEP (534 aa). Residues 3286–3362 form the Carrier 3 domain; that stretch reads TTLGPVEKQM…KVTPRTISLS (77 aa). An O-(pantetheine 4'-phosphoryl)serine modification is found at Ser3323. The interval 3406 to 3819 is condensation 3; the sequence is SPMQEGILLA…DNSGCSVKTV (414 aa). Residues 3857-3933 enclose the Carrier 4 domain; that stretch reads EPTNLIALTV…EVFEHARFSD (77 aa). O-(pantetheine 4'-phosphoryl)serine is present on Ser3894. The segment at 3953–4392 is epimerase 2; the sequence is LSPIQKLHFH…TPSDFQLLSL (440 aa). Residues 4420 to 4823 are condensation 4; it reads PCSPMQEGIL…ARPRARLGTI (404 aa). The segment at 4837–5363 is adenylation 4; sequence WNEQARRPVV…RKVNKWLESF (527 aa). Positions 5385–5461 constitute a Carrier 5 domain; it reads PPLTPIQQTI…SLAACATAII (77 aa). Position 5422 is an O-(pantetheine 4'-phosphoryl)serine (Ser5422). Positions 5508 to 5923 are condensation 5; the sequence is SPMQEGILFS…SLVDHLSLCS (416 aa). An adenylation 5 region spans residues 5941 to 6459; that stretch reads ELRQCLHELI…GKVDRQALRR (519 aa). Residues 6482 to 6558 form the Carrier 6 domain; that stretch reads PISTAEEQQM…DLATLLESPA (77 aa). Position 6519 is an O-(pantetheine 4'-phosphoryl)serine (Ser6519). Residues 6606-6992 are condensation 6; it reads CTPLQESLMA…SQMKSVMGTL (387 aa). The tract at residues 7030–7544 is adenylation 6; the sequence is VEDLIISRAQ…SSGKLARKGV (515 aa). Residues 7575-7651 enclose the Carrier 7 domain; sequence IASSSVERAI…HLASREDLTA (77 aa). At Ser7612 the chain carries O-(pantetheine 4'-phosphoryl)serine. Positions 7670 to 8119 are epimerase 3; the sequence is LTPIQRFFFC…DYPRARLDYT (450 aa). A condensation 7 region spans residues 8164–8504; the sequence is HFIWKIAGTK…DPTSPLQFAD (341 aa). Over residues 8488–8500 the composition is skewed to polar residues; it reads AVNSVSSDPTSPL. The segment at 8488–8515 is disordered; sequence AVNSVSSDPTSPLQFADGQDPMPVSHQP.

It belongs to the NRP synthetase family.

In terms of biological role, nonribosomal peptide synthesis (NRPS) is a key mechanism responsible for the biosynthesis of bioactive metabolites which are potentially contributing to organismal virulence. However, contarary to other nonribosomal peptide synthases, NRPS8 does not encode a secreted peptide, but has more a structural role since it is involved in germ tube formation. This Aspergillus fumigatus (strain ATCC MYA-4609 / CBS 101355 / FGSC A1100 / Af293) (Neosartorya fumigata) protein is Nonribosomal peptide synthetase 8 (NRPS8).